Consider the following 389-residue polypeptide: MISSKGKYFFTSESVTEGHPDKVADQISDSILDAILAQDKDARVACETLVTTGMAFIAGEISTTGYADFQQIVRDTIREIGYVHSDMGFDADTCAVISSIDKQSVDIAQGVDRNTPESQGAGDQGMMFGFACKETEALMPAPIYYAHKLSRKLTEVRKDATLDYLRPDGKTEVAFEYLDGKPVRIADVVIAAQHDDGIEQGQIYEDIKREVVLASLPAEMIDDATKIYINTTGRFVIGGPMGDCGLTGRKIINDTYGGMGNHGGGAFSGKDPSKVDRSGAYMARYIAKNIVAAGLAERAEVQVAYAIGVAEPVSVLATSHGTGEVSDETLTKAVKEVFDLRPWYISERLDLRRPIYKPSACYGHFGRNNPNFTWERTDAVDDLRTACKI.

An ATP-binding site is contributed by H19. D21 serves as a coordination point for Mg(2+). E47 is a K(+) binding site. E60 and Q103 together coordinate L-methionine. Residues 103–113 form a flexible loop region; it reads QSVDIAQGVDR. Residues 168-170, 234-235, D243, 249-250, A266, and K270 contribute to the ATP site; these read DGK, RF, and RK. D243 lines the L-methionine pocket. K274 serves as a coordination point for L-methionine.

Belongs to the AdoMet synthase family. In terms of assembly, homotetramer; dimer of dimers. The cofactor is Mg(2+). It depends on K(+) as a cofactor.

The protein resides in the cytoplasm. It catalyses the reaction L-methionine + ATP + H2O = S-adenosyl-L-methionine + phosphate + diphosphate. It functions in the pathway amino-acid biosynthesis; S-adenosyl-L-methionine biosynthesis; S-adenosyl-L-methionine from L-methionine: step 1/1. In terms of biological role, catalyzes the formation of S-adenosylmethionine (AdoMet) from methionine and ATP. The overall synthetic reaction is composed of two sequential steps, AdoMet formation and the subsequent tripolyphosphate hydrolysis which occurs prior to release of AdoMet from the enzyme. The polypeptide is S-adenosylmethionine synthase (Maridesulfovibrio salexigens (strain ATCC 14822 / DSM 2638 / NCIMB 8403 / VKM B-1763) (Desulfovibrio salexigens)).